A 278-amino-acid polypeptide reads, in one-letter code: Small ribosomal subunit protein uS3 (278 aa).

Residues 39–107 form the KH type-2 domain; that stretch reads LRKAISKKYV…KVQLNIVEIS (69 aa). The interval 255–278 is disordered; the sequence is AEIPAEEKPKRVVKKAENITKEEE.

It belongs to the universal ribosomal protein uS3 family. In terms of assembly, part of the 30S ribosomal subunit. Forms a tight complex with proteins S10 and S14.

In terms of biological role, binds the lower part of the 30S subunit head. Binds mRNA in the 70S ribosome, positioning it for translation. The polypeptide is Small ribosomal subunit protein uS3 (Dehalococcoides mccartyi (strain ATCC BAA-2100 / JCM 16839 / KCTC 5957 / BAV1)).